Reading from the N-terminus, the 109-residue chain is MAGSIVISKEVRVPVSTSQFDYLVSRIGDQFHSSDMWIKDEVYLPMEEGGMSFISTESLNSSGLSIFLATVMRARAASQAEESFPLYENVWNQLVEKLRQDARLGVSGN.

As to quaternary structure, specifically interacts with cognate toxin CdiA, which inhibits the toxin.

In terms of biological role, immunity protein component of a toxin-immunity protein module, which functions as a cellular contact-dependent growth inhibition (CDI) system. CDI modules allow bacteria to communicate with and inhibit the growth of closely related neighboring bacteria in a contact-dependent fashion. Neutralizes the toxic activity of cognate toxin CdiA (C-terminal 160 residue CT fragment) upon expression in E.coli. Does not inhibit toxic activity of CdiA from other strains of B.pseudomallei. In Burkholderia pseudomallei (Pseudomonas pseudomallei), this protein is Immunity protein CdiI (cdiI).